A 119-amino-acid polypeptide reads, in one-letter code: Large ribosomal subunit protein bL20 (119 aa).

The protein belongs to the bacterial ribosomal protein bL20 family.

In terms of biological role, binds directly to 23S ribosomal RNA and is necessary for the in vitro assembly process of the 50S ribosomal subunit. It is not involved in the protein synthesizing functions of that subunit. The chain is Large ribosomal subunit protein bL20 from Jannaschia sp. (strain CCS1).